The following is a 71-amino-acid chain: Gas vesicle protein A (71 aa).

The protein belongs to the gas vesicle GvpA family. In terms of assembly, the gas vesicle shell is 2 nm thick and consists of a single layer of this protein. It forms helical ribs nearly perpendicular to the long axis of the vesicle.

It localises to the gas vesicle shell. In terms of biological role, gas vesicles are hollow, gas filled proteinaceous nanostructures found in some microorganisms. During planktonic growth they allow positioning of the organism at a favorable depth for light or nutrient acquisition. GvpA forms the protein shell. Its function is as follows. Cluster expression in E.coli (gvpA1-gvpA2-gvpC-gvpN-gvpJ-gvpK-gvpF-gvpG-gvpV-gvpW) allows cells to float and produces irregularly shaped gas vesicles. The polypeptide is Gas vesicle protein A (Nostoc sp. (strain PCC 7120 / SAG 25.82 / UTEX 2576)).